A 726-amino-acid chain; its full sequence is F-box protein COS111 (726 aa).

Positions 143 to 194 (FADINCLPEEIICRIIANLNDADSQRNCLLVSQEWSECAKRIIYKDVKFTST) constitute an F-box domain. The disordered stretch occupies residues 276–295 (RSRTRRSSDASSMNSSVFSH). The segment covering 284–295 (DASSMNSSVFSH) has biased composition (low complexity).

F-box protein probably involved in ubiquitin conjugation pathway. The chain is F-box protein COS111 (COS111) from Kluyveromyces lactis (strain ATCC 8585 / CBS 2359 / DSM 70799 / NBRC 1267 / NRRL Y-1140 / WM37) (Yeast).